The primary structure comprises 301 residues: Putative S-adenosyl-L-methionine-dependent methyltransferase MUL_0450 (301 aa).

S-adenosyl-L-methionine contacts are provided by residues Asp-127 and 156–157 (DL).

The protein belongs to the UPF0677 family.

Exhibits S-adenosyl-L-methionine-dependent methyltransferase activity. The protein is Putative S-adenosyl-L-methionine-dependent methyltransferase MUL_0450 of Mycobacterium ulcerans (strain Agy99).